The sequence spans 737 residues: Protein penguin (737 aa).

Positions 1-128 (MVSSEPKGPA…EKKDLKLKRK (128 aa)) are disordered. 2 stretches are compositionally biased toward basic and acidic residues: residues 76–89 (KKFDKSGATGDKRL) and 107–122 (EGEKQDWNKFKKEKKD). The PUM-HD domain occupies 139–490 (EANQIHEKLR…EILEQIEAPI (352 aa)). Pumilio repeat units follow at residues 167–202 (NVGDTISKVVKAHDTARVIQSMLKYASPALRAEISE), 203–238 (KLLPFTVEMCQSKYAQFCVQRMLKYGAPATKAKLVD), 239–274 (SLYGHIVRLAGHSIGSGLLDSMYQSATPNQRIYMRQ), 388–425 (NIKEHLLKIANHEHGHVFLISLLNALDDTKATKKAIYD), and 426–462 (HLHGDLKALMSSPYGRRVIQWLVAPGDTTCFHPEFIR). Positions 577–638 (VESSSDDEDE…EEEPAAPLVS (62 aa)) are disordered. Acidic residues predominate over residues 580 to 600 (SSDDEDEDEDEDEESDDEGDE). Positions 601–615 (KEQKEAAADDAEPKV) are enriched in basic and acidic residues. The span at 616–626 (KKAKKEPKKPK) shows a compositional bias: basic residues.

This is Protein penguin from Drosophila melanogaster (Fruit fly).